The chain runs to 355 residues: Peptide chain release factor 1 (355 aa).

N5-methylglutamine is present on Gln-233.

The protein belongs to the prokaryotic/mitochondrial release factor family. Post-translationally, methylated by PrmC. Methylation increases the termination efficiency of RF1.

It localises to the cytoplasm. Functionally, peptide chain release factor 1 directs the termination of translation in response to the peptide chain termination codons UAG and UAA. This Caldicellulosiruptor saccharolyticus (strain ATCC 43494 / DSM 8903 / Tp8T 6331) protein is Peptide chain release factor 1.